A 49-amino-acid chain; its full sequence is Metallothionein (49 aa).

The interval 1 to 16 (SCAGSCKCKNCRCRSC) is beta. 17 residues coordinate a divalent metal cation: Cys-2, Cys-6, Cys-8, Cys-11, Cys-13, Cys-16, Cys-20, Cys-21, Cys-23, Cys-24, Cys-28, Cys-31, Cys-35, Cys-37, Cys-45, Cys-47, and Cys-48. Positions 17 to 49 (RKSCCSCCPAGCNNCAKGCVCKEPASSKCSCCH) are alpha.

The protein belongs to the metallothionein superfamily. Type 1 family.

Its function is as follows. Metallothioneins have a high content of cysteine residues that bind various heavy metals. The chain is Metallothionein from Phasianus colchicus colchicus (Black-necked pheasant).